A 205-amino-acid chain; its full sequence is Small ribosomal subunit protein uS4 (205 aa).

In terms of domain architecture, S4 RNA-binding spans 94–154 (SRLDNSVYRA…TRKDGKIRKN (61 aa)).

This sequence belongs to the universal ribosomal protein uS4 family. As to quaternary structure, part of the 30S ribosomal subunit. Contacts protein S5. The interaction surface between S4 and S5 is involved in control of translational fidelity.

One of the primary rRNA binding proteins, it binds directly to 16S rRNA where it nucleates assembly of the body of the 30S subunit. Functionally, with S5 and S12 plays an important role in translational accuracy. This chain is Small ribosomal subunit protein uS4, found in Mesomycoplasma hyopneumoniae (strain 232) (Mycoplasma hyopneumoniae).